Here is a 480-residue protein sequence, read N- to C-terminus: Protein nucleotidyltransferase YdiU (480 aa).

ATP contacts are provided by glycine 86, glycine 88, arginine 89, lysine 109, aspartate 121, glycine 122, arginine 172, and arginine 179. Residue aspartate 248 is the Proton acceptor of the active site. Mg(2+) contacts are provided by asparagine 249 and aspartate 258. Aspartate 258 contributes to the ATP binding site.

This sequence belongs to the SELO family. Requires Mg(2+) as cofactor. It depends on Mn(2+) as a cofactor.

It carries out the reaction L-seryl-[protein] + ATP = 3-O-(5'-adenylyl)-L-seryl-[protein] + diphosphate. The enzyme catalyses L-threonyl-[protein] + ATP = 3-O-(5'-adenylyl)-L-threonyl-[protein] + diphosphate. It catalyses the reaction L-tyrosyl-[protein] + ATP = O-(5'-adenylyl)-L-tyrosyl-[protein] + diphosphate. The catalysed reaction is L-histidyl-[protein] + UTP = N(tele)-(5'-uridylyl)-L-histidyl-[protein] + diphosphate. It carries out the reaction L-seryl-[protein] + UTP = O-(5'-uridylyl)-L-seryl-[protein] + diphosphate. The enzyme catalyses L-tyrosyl-[protein] + UTP = O-(5'-uridylyl)-L-tyrosyl-[protein] + diphosphate. In terms of biological role, nucleotidyltransferase involved in the post-translational modification of proteins. It can catalyze the addition of adenosine monophosphate (AMP) or uridine monophosphate (UMP) to a protein, resulting in modifications known as AMPylation and UMPylation. This chain is Protein nucleotidyltransferase YdiU, found in Salmonella agona (strain SL483).